Consider the following 190-residue polypeptide: Xanthine phosphoribosyltransferase (190 aa).

Residues Leu20 and Asn27 each coordinate xanthine. 128-132 contributes to the 5-phospho-alpha-D-ribose 1-diphosphate binding site; the sequence is ANGKA. Lys156 lines the xanthine pocket.

The protein belongs to the purine/pyrimidine phosphoribosyltransferase family. Xpt subfamily. As to quaternary structure, homodimer.

It localises to the cytoplasm. The enzyme catalyses XMP + diphosphate = xanthine + 5-phospho-alpha-D-ribose 1-diphosphate. The protein operates within purine metabolism; XMP biosynthesis via salvage pathway; XMP from xanthine: step 1/1. Functionally, converts the preformed base xanthine, a product of nucleic acid breakdown, to xanthosine 5'-monophosphate (XMP), so it can be reused for RNA or DNA synthesis. The sequence is that of Xanthine phosphoribosyltransferase from Pseudomonas fluorescens (strain ATCC BAA-477 / NRRL B-23932 / Pf-5).